The chain runs to 373 residues: MKLPVTYKVEDKDGKARAGVITTLHGEIETPVFMPVGTQATVKTMSKEELLDIGSEIILGNTYHLYLRPNDELIARLGGLHKFMNWDRPILTDSGGFQVFSLGSLRKIKEEGVYFSSHIDGSKHFISPEKSIQIQNNLGSDIVMLFDECPPGLSTREYIIPSIERTTRWAKRCVEAHQKKDIQGLFAIVQGGIYEDLRQKSLDELSEMDENFSGYAIGGLAVGEPREDMYRILDYIVEKCPEEKPRYLMGVGEPVDMLNAVESGIDMMDCVQPTRLARHGTVFTKDGRLVIKSERYKEDTKPLDEECDCYVCKNYSRAYIRHLIKVQEVLGLRLTSYHNLYFLIKLMKDAREAIKEKRFKEFKEKFIQRYEGK.

The Proton acceptor role is filled by Asp93. Substrate-binding positions include 93-97 (DSGGF), Asp147, Gln190, and Gly219. The segment at 250-256 (GVGEPVD) is RNA binding. The active-site Nucleophile is Asp269. Positions 274 to 278 (TRLAR) are RNA binding; important for wobble base 34 recognition. Residues Cys307, Cys309, Cys312, and His338 each coordinate Zn(2+).

The protein belongs to the queuine tRNA-ribosyltransferase family. In terms of assembly, homodimer. Within each dimer, one monomer is responsible for RNA recognition and catalysis, while the other monomer binds to the replacement base PreQ1. Zn(2+) serves as cofactor.

It catalyses the reaction 7-aminomethyl-7-carbaguanine + guanosine(34) in tRNA = 7-aminomethyl-7-carbaguanosine(34) in tRNA + guanine. It functions in the pathway tRNA modification; tRNA-queuosine biosynthesis. In terms of biological role, catalyzes the base-exchange of a guanine (G) residue with the queuine precursor 7-aminomethyl-7-deazaguanine (PreQ1) at position 34 (anticodon wobble position) in tRNAs with GU(N) anticodons (tRNA-Asp, -Asn, -His and -Tyr). Catalysis occurs through a double-displacement mechanism. The nucleophile active site attacks the C1' of nucleotide 34 to detach the guanine base from the RNA, forming a covalent enzyme-RNA intermediate. The proton acceptor active site deprotonates the incoming PreQ1, allowing a nucleophilic attack on the C1' of the ribose to form the product. After dissociation, two additional enzymatic reactions on the tRNA convert PreQ1 to queuine (Q), resulting in the hypermodified nucleoside queuosine (7-(((4,5-cis-dihydroxy-2-cyclopenten-1-yl)amino)methyl)-7-deazaguanosine). In Fusobacterium nucleatum subsp. nucleatum (strain ATCC 25586 / DSM 15643 / BCRC 10681 / CIP 101130 / JCM 8532 / KCTC 2640 / LMG 13131 / VPI 4355), this protein is Queuine tRNA-ribosyltransferase.